Here is a 950-residue protein sequence, read N- to C-terminus: F-box only protein 10 (950 aa).

Residues 1–48 enclose the F-box domain; sequence METGGLPLELWRMILAYLHLPDLGRCSLVCRAWYELILSLDSTRWRQL. PbH1 repeat units follow at residues 198 to 217 and 238 to 260; these read SGHI…QVHG and VPLC…TVEG. The tract at residues 313 to 364 is disordered; it reads IEGSQSPTSPVCSSPKPGSKEAEVGSDGERVAQTPDSSDGGLSPSGEDEDDE. Polar residues predominate over residues 315-324; the sequence is GSQSPTSPVC. A phosphoserine mark is found at serine 321 and serine 326. Residues 330-342 are compositionally biased toward basic and acidic residues; the sequence is GSKEAEVGSDGER. Low complexity predominate over residues 347–357; the sequence is PDSSDGGLSPS. PbH1 repeat units lie at residues 423-444, 467-489, 490-512, 513-535, 536-558, 559-581, 582-604, 605-627, 628-650, 651-673, 713-735, 736-758, 760-782, 783-805, and 828-850; these read VQGC…FVCS, NSKI…FLRL, EGGG…DIRK, KSNP…VVLG, NGKG…YILY, HGNP…AVNE, NGKG…DIRR, GGVP…VVGD, EGKG…WMMS, SSLP…AVFS, ITVA…FVQS, SEAL…TIVQ, SQLT…KVEF, QCKV…ITKG, and RSDT…AVRG.

Component of the SCF(FBXO10) complex consisting of CUL1, SKP1 and FBXO10. Interacts with BCL2. Interacts with PRDM1. In terms of tissue distribution, particularly highly expressed in B-cells.

The protein localises to the cytoplasm. It participates in protein modification; protein ubiquitination. Its function is as follows. Substrate-recognition component of the SCF (SKP1-CUL1-F-box protein)-type E3 ubiquitin ligase complex. Mediates the ubiquitination and degradation of BCL2, an antiapoptotic protein, thereby playing a role in apoptosis by controlling the stability of BCL2. Targets also the receptor for advanced glycation end products RAGE for ubiquitination and subsequent lysosomal degradation. Directly controls HGAL/GCSAM ubiquitination and degradation and thereby decreases BCR signaling. The sequence is that of F-box only protein 10 (Fbxo10) from Mus musculus (Mouse).